Consider the following 161-residue polypeptide: 6,7-dimethyl-8-ribityllumazine synthase (161 aa).

5-amino-6-(D-ribitylamino)uracil-binding positions include Trp26, 58-60 (SFE), and 81-83 (VVI). 86–87 (GT) contacts (2S)-2-hydroxy-3-oxobutyl phosphate. His89 (proton donor) is an active-site residue. Phe114 is a binding site for 5-amino-6-(D-ribitylamino)uracil. Arg128 lines the (2S)-2-hydroxy-3-oxobutyl phosphate pocket.

Belongs to the DMRL synthase family.

The catalysed reaction is (2S)-2-hydroxy-3-oxobutyl phosphate + 5-amino-6-(D-ribitylamino)uracil = 6,7-dimethyl-8-(1-D-ribityl)lumazine + phosphate + 2 H2O + H(+). It functions in the pathway cofactor biosynthesis; riboflavin biosynthesis; riboflavin from 2-hydroxy-3-oxobutyl phosphate and 5-amino-6-(D-ribitylamino)uracil: step 1/2. Catalyzes the formation of 6,7-dimethyl-8-ribityllumazine by condensation of 5-amino-6-(D-ribitylamino)uracil with 3,4-dihydroxy-2-butanone 4-phosphate. This is the penultimate step in the biosynthesis of riboflavin. The sequence is that of 6,7-dimethyl-8-ribityllumazine synthase from Streptomyces avermitilis (strain ATCC 31267 / DSM 46492 / JCM 5070 / NBRC 14893 / NCIMB 12804 / NRRL 8165 / MA-4680).